Reading from the N-terminus, the 521-residue chain is Medium/long-chain-fatty-acid--[acyl-carrier-protein] ligase MbtM (521 aa).

This sequence belongs to the ATP-dependent AMP-binding enzyme family.

The catalysed reaction is a long-chain fatty acid + holo-[ACP] + ATP = a long-chain fatty acyl-[ACP] + AMP + diphosphate. It carries out the reaction a medium-chain fatty acid + holo-[ACP] + ATP = a medium-chain fatty acyl-[ACP] + AMP + diphosphate. It participates in siderophore biosynthesis; mycobactin biosynthesis. Functionally, activates lipidic moieties required for mycobactin biosynthesis. Converts medium- to long-chain aliphatic fatty acids into acyl adenylate, which is further transferred on to the phosphopantetheine arm of the carrier protein MbtL. This is Medium/long-chain-fatty-acid--[acyl-carrier-protein] ligase MbtM (mbtM) from Mycobacterium bovis (strain ATCC BAA-935 / AF2122/97).